A 237-amino-acid polypeptide reads, in one-letter code: MVEYNRIFCVLVIFSTTIKCEYSELMNQKIGVRVEVLNMIYENETTITSTGHPRCRLTLHKSGWDRDTCSSPQFKLNDTLSWSTRVCYKWVCDTTKYAMRVESCWIGSPNMSVYILRDDGCTIEKAILTSPVYTSFNRAAAIGWMAVRQKNMKYMHVGCTIRLCHLCDPKCQTITPPRTCNDNRADDYEAMWNSSSRVKNLCFPEPSTTENLNLNFGNSPFQNVGNIIILLLVFLLR.

Positions Met-1–Cys-20 are cleaved as a signal peptide.

Interacts with vps-51 and vps-52. As to expression, expression detected in motor neurons.

It is found in the golgi apparatus. The protein resides in the trans-Golgi network. In Caenorhabditis elegans, this protein is Cuticlin-like protein 19 (cutl-19).